The following is a 198-amino-acid chain: DnaJ homolog subfamily C member 12 (198 aa).

Residue Met-1 is modified to N-acetylmethionine. Positions 14–79 (DYYTLLGCDE…ESRARYDHWR (66 aa)) constitute a J domain. A disordered region spans residues 121–183 (TNTAQNKERS…CGHLHFRWSG (63 aa)). Over residues 126 to 156 (NKERSEQRETKQGDPDSTPEKMMQKESESPE) the composition is skewed to basic and acidic residues. Ser-160, Ser-166, and Ser-182 each carry phosphoserine.

In terms of assembly, interacts with HSPA8. Interacts with TPH1. Interacts with TPH2.

The protein resides in the cytoplasm. Probable co-chaperone that participates in the proper folding of biopterin-dependent aromatic amino acid hydroxylases, which include phenylalanine-4-hydroxylase (PAH), tyrosine 3-monooxygenase (TH) and peripheral and neuronal tryptophan hydroxylases (TPH1 and TPH2). The chain is DnaJ homolog subfamily C member 12 (Dnajc12) from Rattus norvegicus (Rat).